We begin with the raw amino-acid sequence, 254 residues long: CRISPR-associated endonuclease Cas1 (254 aa).

Residues E78, H146, and E161 each contribute to the Mn(2+) site.

This sequence belongs to the CRISPR-associated endonuclease Cas1 family. In terms of assembly, homodimer, forms a heterotetramer with a Cas2 homodimer. Mg(2+) is required as a cofactor. Requires Mn(2+) as cofactor.

Its function is as follows. CRISPR (clustered regularly interspaced short palindromic repeat), is an adaptive immune system that provides protection against mobile genetic elements (viruses, transposable elements and conjugative plasmids). CRISPR clusters contain spacers, sequences complementary to antecedent mobile elements, and target invading nucleic acids. CRISPR clusters are transcribed and processed into CRISPR RNA (crRNA). Acts as a dsDNA endonuclease. Involved in the integration of spacer DNA into the CRISPR cassette. This chain is CRISPR-associated endonuclease Cas1, found in Leptospira interrogans serogroup Icterohaemorrhagiae serovar Lai (strain 56601).